The primary structure comprises 244 residues: 5-oxoprolinase subunit A (244 aa).

This sequence belongs to the LamB/PxpA family. As to quaternary structure, forms a complex composed of PxpA, PxpB and PxpC.

The catalysed reaction is 5-oxo-L-proline + ATP + 2 H2O = L-glutamate + ADP + phosphate + H(+). Functionally, catalyzes the cleavage of 5-oxoproline to form L-glutamate coupled to the hydrolysis of ATP to ADP and inorganic phosphate. The protein is 5-oxoprolinase subunit A of Escherichia coli O139:H28 (strain E24377A / ETEC).